A 6684-amino-acid chain; its full sequence is Replicase polyprotein 1ab (6684 aa).

One can recognise a CoV Nsp1 globular domain in the interval 2 to 108; it reads SSKQFKILVN…DFDLKIARTG (107 aa). The region spanning 111-349 is the CoV Nsp2 N-terminal domain; sequence AIYVDQYMCG…KSLVACSVKR (239 aa). Zn(2+)-binding residues include Cys240, Cys242, Cys259, and Cys260. Residues 240-260 form a C4 region; sequence CPCGSESSGVGDWTGFKTACC. The CoV Nsp2 middle domain occupies 378–773; it reads NVGLLFKKTP…CNAARNDIEI (396 aa). One can recognise a CoV Nsp2 C-terminal domain in the interval 768–879; the sequence is RNDIEIGGIP…VQRMYNKMGG (112 aa). One can recognise a Ubiquitin-like 1 domain in the interval 882-983; sequence KTVSFSEEVD…DGIMISQYDI (102 aa). Residues 989 to 1032 are disordered; the sequence is EKSEVSASSEEEEVESVEEDPENEIVEASEGAEGTSSQEEVETV. Acidic residues predominate over residues 997-1015; that stretch reads SEEEEVESVEEDPENEIVE. One can recognise a Peptidase C16 1 domain in the interval 1055–1299; it reads PWAAAVDVQE…FKVEKVEQQP (245 aa). Catalysis depends on Cys1093, which acts as the For PL1-PRO activity. Residues 1164-1195 form a C4-type 1; degenerate zinc finger; that stretch reads CGCGEKEIVLERAVFKLTPLKESFNYGVCGDC. Active-site for PL1-PRO activity residues include His1244 and Asp1257. A Macro domain is found at 1318–1489; sequence NDDLILPFYK…TIENFFSCSI (172 aa). Positions 1486-1542 constitute a Ubiquitin-like 2 domain; sequence SCSIPVNVTEDNVNHERVSVSFDKTYGEQLKGTVVIKDKDVTNQLPSAFDVGQKVIK. The Peptidase C16 2 domain maps to 1550–1803; sequence AHYGFRDAAA…KVAASPKIVQ (254 aa). Cys1588 functions as the For PL2-PRO activity in the catalytic mechanism. The Zn(2+) site is built by Cys1667, Cys1670, Cys1694, and His1696. The C4-type 2; atypical zinc-finger motif lies at 1667 to 1696; that stretch reads CDKCAKVEKFVGPVVAAPLAIHGTDETCVH. Active-site for PL2-PRO activity residues include His1741 and Asp1754. A helical transmembrane segment spans residues 1896 to 1916; the sequence is LVLLLIAIYNFFYLFVSIPVV. An HD1 region spans residues 1896–2053; that stretch reads LVLLLIAIYN…LALKHIVFAC (158 aa). Residues 1905-1970 enclose the 3Ecto domain; it reads NFFYLFVSIP…LQVTWDFKSD (66 aa). Intrachain disulfides connect Cys1921/Cys1948 and Cys1939/Cys1945. Helical transmembrane passes span 1995 to 2015 and 2033 to 2053; these read CFLM…FGYV and FVIV…VFAC. The interval 2044 to 2134 is Y1; the sequence is LALKHIVFAC…SVKQTVYATD (91 aa). In terms of domain architecture, CoV Nsp3 Y spans 2044–2384; it reads LALKHIVFAC…PYERFTESVS (341 aa). 8 residues coordinate Zn(2+): His2048, Cys2053, Cys2058, Cys2061, Cys2094, His2097, Cys2101, and Cys2104. Residues 2048–2061 are ZF1; it reads HIVFACSNPSCKTC. The interval 2094–2104 is ZF2; the sequence is CKKHNFYCKNC. The Y2 stretch occupies residues 2135-2224; sequence RSHQEVTKVE…IVNSDLLEDL (90 aa). The interval 2135–2384 is coV-Y; the sequence is RSHQEVTKVE…PYERFTESVS (250 aa). The segment at 2225-2281 is Y3; that stretch reads SVDFKGALFNAKKNVIKNSFNVDVSECKNLDECYRACNLNVSFSTFEMAVNNAHRFG. Positions 2282-2384 are Y4; the sequence is ILITDRSFNN…PYERFTESVS (103 aa). 8 helical membrane-spanning segments follow: residues 2401-2421, 2467-2487, 2497-2517, 2538-2558, 2666-2686, 2695-2715, 2721-2741, and 2746-2766; these read IVIL…YSVA, YGFI…VFDL, PAYV…AFGV, CVFN…VYCA, GAML…YGVL, CTFL…SYFV, FMII…YPGI, and FIIA…ILVF. The tract at residues 2401 to 2766 is HD2; it reads IVILVFVFIF…YVITAYILVF (366 aa). The 96-residue stretch at 2783 to 2878 folds into the Nsp4C domain; sequence LFEGDKFVGN…PTVSVNSTLQ (96 aa). In terms of domain architecture, Peptidase C30 spans 2879–3180; the sequence is SGLRKMAQPS…IRQMYGVNLQ (302 aa). Active-site for 3CL-PRO activity residues include His2919 and Cys3022. Transmembrane regions (helical) follow at residues 3187–3207, 3217–3237, 3242–3262, 3280–3300, 3313–3333, 3347–3367, 3371–3391, and 3394–3414; these read FFYP…EFFM, TFVS…VSGI, LFFM…NLFW, MFLP…IVFV, WFSL…IFGT, FVNM…VVIA, IAYY…FGFM, and ISIV…ILYW. Residues 3187-3414 form an HD3 region; it reads FFYPIMTAMT…FCCYYGILYW (228 aa). Residues 3475-3557 form the RdRp Nsp7 cofactor domain; that stretch reads SKLTEMKCTN…SYFENTTILQ (83 aa). The RdRp Nsp8 cofactor domain occupies 3558-3752; it reads SVASAYAALP…ITCERTTKLQ (195 aa). Positions 3753–3863 constitute a Nsp9 ssRNA-binding domain; it reads NNEIMPGKLK…GYIGATVRLQ (111 aa). Residues 3864–4004 form the ExoN/MTase coactivator domain; the sequence is AGKPTEHPSN…TSMQSFTVDQ (141 aa). Zn(2+) contacts are provided by Cys3937, Cys3940, His3946, Cys3953, Cys3979, Cys3982, Cys3990, and Cys3992. 2 zinc fingers span residues 3937–3953 and 3979–3992; these read CIYC…DGLC and CVVC…GCMC. The NiRAN domain maps to 4006-4255; sequence YLNRVRGSSA…ESENFVKSDI (250 aa). The Nsp12 Interface domain maps to 4261 to 4359; it reads KQYDLLAYDF…WNLDVKLDTM (99 aa). Positions 4290, 4296, 4301, 4305, and 4482 each coordinate Zn(2+). A Nsp12 RNA-dependent RNA polymerase domain is found at 4360 to 4927; the sequence is KLSMTDLLRF…SLYEKSTVLQ (568 aa). The segment at 4362–4576 is rdRp Fingers N-ter; it reads SMTDLLRFVT…HQKHLKSIAA (215 aa). The rdRp Palm N-ter stretch occupies residues 4577 to 4615; it reads TRNATVVIGSTKFYGGWDNMLKNLMRDVDNGCLMGWDYP. In terms of domain architecture, RdRp catalytic spans 4607–4769; sequence GCLMGWDYPK…CYNKDYADLG (163 aa). The tract at residues 4616-4674 is rdRp Fingers C-ter; that stretch reads KCDRALPNMIRMASAMILGSKHVGCCTHNDRFYRLSNELAQVLTEVVHCTGGFYFKPGG. The Zn(2+) site is built by His4637, Cys4640, and Cys4641. The rdRp Palm C-ter stretch occupies residues 4675–4810; that stretch reads TTSGDGTTAY…SVGPHEFCSQ (136 aa). Residues Ser4754, Asp4755, and Asp4756 contribute to the active site. The interval 4811–4927 is rdRp Thumb; sequence HTLQIVGPDG…SLYEKSTVLQ (117 aa). The CV ZBD domain occupies 4928 to 5040; it reads AAGMCVVCGS…EDFNKLAVSD (113 aa). The Zn(2+) site is built by Cys4932, Cys4935, Cys4943, Cys4946, Cys4953, Cys4956, His4960, His4966, Cys4977, Cys4982, Cys4999, and His5002. Positions 5175 to 5366 constitute a (+)RNA virus helicase ATP-binding domain; sequence NTISKLYPVF…MCTLGPDVFL (192 aa). 5210–5217 contributes to the ATP binding site; the sequence is GPPGSGKS. Residues 5367-5536 form the (+)RNA virus helicase C-terminal domain; the sequence is HKCYRCPAEI…AKPETCGLFK (170 aa). The ExoN domain occupies 5598–5812; sequence LFCTRDFAMR…RCLAIHDCFV (215 aa). Active-site residues include Asp5616, Glu5618, and Glu5717. 7 residues coordinate Zn(2+): Cys5733, Cys5735, Cys5751, His5754, His5782, Cys5786, and His5789. Residues His5793 and Asp5798 contribute to the active site. Cys5804 contacts Zn(2+). Positions 5821-6042 constitute an N7-MTase domain; sequence YPFIDNEEKI…MLWHGFVNSK (222 aa). S-adenosyl-L-methionine is bound at residue 5856–5862; the sequence is DVGNPKG. A gpppA-binding region spans residues 5933-5947; sequence CNGGALYVNNHAFHT. Cys5971, Cys5988, Cys5999, and His6002 together coordinate Zn(2+). The region spanning 6046-6106 is the Nsp15 N-terminal oligomerization domain; the sequence is SLENVAFNVV…NVAFELYAKR (61 aa). The 118-residue stretch at 6107 to 6224 folds into the AV-Nsp11N/CoV-Nsp15M domain; it reads KLGLTPPLTI…IYVRKNGEYV (118 aa). The NendoU domain maps to 6241 to 6381; sequence KPRSTMEEDF…ENSHIKTFYP (141 aa). Catalysis depends on residues His6271, His6286, Lys6327, Lys6429, Asp6513, Lys6553, and Glu6586. A Nidovirus-type SAM-dependent 2'-O-MTase domain is found at 6385-6681; it reads SAEWNPGYSM…KLLNFGNHFV (297 aa).

The protein belongs to the coronaviruses polyprotein 1ab family. In terms of assembly, 3CL-PRO exists as monomer and homodimer. Eight copies of nsp7 and eight copies of nsp8 assemble to form a heterohexadecamer. Nsp9 is a dimer. Nsp10 forms a dodecamer. Mn(2+) is required as a cofactor. In terms of processing, specific enzymatic cleavages in vivo by its own proteases yield mature proteins. 3CL-PRO is autocatalytically processed.

It is found in the host membrane. Its subcellular location is the host cytoplasm. The protein resides in the host perinuclear region. It localises to the host endoplasmic reticulum-Golgi intermediate compartment. The catalysed reaction is Thiol-dependent hydrolysis of ester, thioester, amide, peptide and isopeptide bonds formed by the C-terminal Gly of ubiquitin (a 76-residue protein attached to proteins as an intracellular targeting signal).. It carries out the reaction RNA(n) + a ribonucleoside 5'-triphosphate = RNA(n+1) + diphosphate. The enzyme catalyses ATP + H2O = ADP + phosphate + H(+). It catalyses the reaction a 5'-end diphospho-ribonucleoside in mRNA + GTP + H(+) = a 5'-end (5'-triphosphoguanosine)-ribonucleoside in mRNA + diphosphate. The catalysed reaction is a 5'-end (N(7)-methyl 5'-triphosphoguanosine)-ribonucleoside in mRNA + S-adenosyl-L-methionine = a 5'-end (N(7)-methyl 5'-triphosphoguanosine)-(2'-O-methyl-ribonucleoside) in mRNA + S-adenosyl-L-homocysteine + H(+). It carries out the reaction uridylyl-uridylyl-ribonucleotide-RNA = a 3'-end uridylyl-2',3'-cyclophospho-uridine-RNA + a 5'-end dephospho-ribonucleoside-RNA. Functionally, the replicase polyprotein of coronaviruses is a multifunctional protein: it contains the activities necessary for the transcription of negative stranded RNA, leader RNA, subgenomic mRNAs and progeny virion RNA as well as proteinases responsible for the cleavage of the polyprotein into functional products. In terms of biological role, non-structural protein 1 inhibits host translation. By suppressing host gene expression, nsp1 facilitates efficient viral gene expression in infected cells and evasion from host immune response. Its function is as follows. The papain-like proteinase 1 (PLP1) and papain-like proteinase 2 (PLP2) are responsible for the cleavages located at the N-terminus of the replicase polyprotein. In addition, PLP2 possesses a deubiquitinating/deISGylating activity and processes both 'Lys-48'- and 'Lys-63'-linked polyubiquitin chains from cellular substrates. PLP2 also antagonizes innate immune induction of type I interferon by blocking the nuclear translocation of host IRF-3. Responsible for the majority of cleavages as it cleaves the C-terminus of replicase polyprotein at 11 sites. Recognizes substrates containing the core sequence [ILMVF]-Q-|-[SAGC]. Inhibited by the substrate-analog Cbz-Val-Asn-Ser-Thr-Leu-Gln-CMK. Functionally, the helicase which contains a zinc finger structure displays RNA and DNA duplex-unwinding activities with 5' to 3' polarity. ATPase activity is strongly stimulated by poly(U), poly(dT), poly(C), poly(dA), but not by poly(G). In terms of biological role, the exoribonuclease acts on both ssRNA and dsRNA in a 3' to 5' direction. Its function is as follows. Nsp7-nsp8 hexadecamer may possibly confer processivity to the polymerase, maybe by binding to dsRNA or by producing primers utilized by the latter. Forms a primer, NSP9-pU, which is utilized by the polymerase for the initiation of RNA chains. Interacts with ribosome signal recognition particle RNA (SRP). Together with NSP8, suppress protein integration into the cell membrane, thereby disrupting host immune defenses. Functionally, RNA-directed RNA polymerase that catalyzes the transcription of viral genomic and subgenomic RNAs. Acts in complex with nsp7 and nsp8 to transcribe both the minus and positive strands of genomic RNA. The kinase-like NiRAN domain of NSP12 attaches one or more nucleotides to the amino terminus of NSP9, forming a covalent RNA-protein intermediate that serves as transcription/replication primer. Subgenomic RNAs (sgRNAs) are formed by discontinuous transcription: The polymerase has the ability to pause at transcription-regulating sequences (TRS) and jump to the leader TRS, resulting in a major deletion. This creates a series of subgenomic RNAs that are replicated, transcribed and translated. In addition, Nsp12 is a subunit of the viral RNA capping enzyme that catalyzes the RNA guanylyltransferase reaction for genomic and sub-genomic RNAs. Subsequently, the NiRAN domain transfers RNA to GDP, and forms the core cap structure GpppA-RNA. In terms of biological role, plays a role in viral transcription/replication and prevents the simultaneous activation of host cell dsRNA sensors, such as MDA5/IFIH1, OAS, and PKR. Acts by degrading the 5'-polyuridines generated during replication of the poly(A) region of viral genomic and subgenomic RNAs. Catalyzes a two-step reaction in which a 2'3'-cyclic phosphate (2'3'-cP) is first generated by 2'-O transesterification, which is then hydrolyzed to a 3'-phosphate (3'-P). If not degraded, poly(U) RNA would hybridize with poly(A) RNA tails and activate host dsRNA sensors. The protein is Replicase polyprotein 1ab (rep) of Sus scrofa (Pig).